The sequence spans 274 residues: Putative phosphoenolpyruvate synthase regulatory protein (274 aa).

Residue 154–161 (AVSRSGKT) coordinates ADP.

Belongs to the pyruvate, phosphate/water dikinase regulatory protein family. PSRP subfamily.

The enzyme catalyses [pyruvate, water dikinase] + ADP = [pyruvate, water dikinase]-phosphate + AMP + H(+). The catalysed reaction is [pyruvate, water dikinase]-phosphate + phosphate + H(+) = [pyruvate, water dikinase] + diphosphate. In terms of biological role, bifunctional serine/threonine kinase and phosphorylase involved in the regulation of the phosphoenolpyruvate synthase (PEPS) by catalyzing its phosphorylation/dephosphorylation. This is Putative phosphoenolpyruvate synthase regulatory protein from Alkalilimnicola ehrlichii (strain ATCC BAA-1101 / DSM 17681 / MLHE-1).